The primary structure comprises 294 residues: Diaminopimelate epimerase (294 aa).

Substrate is bound by residues Asn15, Gln47, and Asn67. Catalysis depends on Cys76, which acts as the Proton donor. Residues 77–78 (GN), Asn163, Asn197, and 215–216 (ER) each bind substrate. The Proton acceptor role is filled by Cys224. 225–226 (GS) provides a ligand contact to substrate.

It belongs to the diaminopimelate epimerase family. As to quaternary structure, homodimer.

The protein resides in the cytoplasm. It carries out the reaction (2S,6S)-2,6-diaminopimelate = meso-2,6-diaminopimelate. The protein operates within amino-acid biosynthesis; L-lysine biosynthesis via DAP pathway; DL-2,6-diaminopimelate from LL-2,6-diaminopimelate: step 1/1. In terms of biological role, catalyzes the stereoinversion of LL-2,6-diaminopimelate (L,L-DAP) to meso-diaminopimelate (meso-DAP), a precursor of L-lysine and an essential component of the bacterial peptidoglycan. The sequence is that of Diaminopimelate epimerase from Mesorhizobium japonicum (strain LMG 29417 / CECT 9101 / MAFF 303099) (Mesorhizobium loti (strain MAFF 303099)).